Reading from the N-terminus, the 59-residue chain is Probable stress-associated endoplasmic reticulum protein (59 aa).

Positions 1-30 are disordered; it reads MSQSRTLRQKSQKYQENIEKRGVASPKKKE. At 1–34 the chain is on the cytoplasmic side; that stretch reads MSQSRTLRQKSQKYQENIEKRGVASPKKKEDGLN. Residues 16–30 show a composition bias toward basic and acidic residues; the sequence is ENIEKRGVASPKKKE. A helical; Anchor for type IV membrane protein transmembrane segment spans residues 35 to 55; the sequence is INPYVLGFIIFVVVGSTLLQI. Topologically, residues 56–59 are extracellular; sequence LKGQ.

Belongs to the RAMP4 family.

The protein resides in the membrane. It localises to the endoplasmic reticulum membrane. May interact with target proteins during translocation into the lumen of the endoplasmic reticulum. May protect unfolded target proteins against degradation and facilitate correct glycosylation. This Dictyostelium discoideum (Social amoeba) protein is Probable stress-associated endoplasmic reticulum protein (serp).